The following is a 378-amino-acid chain: Probable endopolygalacturonase AFUB_016610 (378 aa).

The N-terminal stretch at methionine 1–alanine 19 is a signal peptide. The propeptide occupies serine 20 to arginine 35. Cysteine 38 and cysteine 56 form a disulfide bridge. PbH1 repeat units lie at residues threonine 147–glycine 169, cysteine 170–serine 200, and serine 201–serine 222. Aspartate 215 (proton donor) is an active-site residue. Cysteine 217 and cysteine 233 are disulfide-bonded. Residue histidine 237 is part of the active site. PbH1 repeat units follow at residues valine 252 to alanine 273 and isoleucine 281 to glutamine 303. The N-linked (GlcNAc...) asparagine glycan is linked to asparagine 254. A glycan (N-linked (GlcNAc...) asparagine) is linked at asparagine 327. A disulfide bond links cysteine 345 and cysteine 350. Asparagine 352 carries N-linked (GlcNAc...) asparagine glycosylation. Cysteine 369 and cysteine 378 are oxidised to a cystine.

It belongs to the glycosyl hydrolase 28 family.

It localises to the secreted. The catalysed reaction is (1,4-alpha-D-galacturonosyl)n+m + H2O = (1,4-alpha-D-galacturonosyl)n + (1,4-alpha-D-galacturonosyl)m.. Its function is as follows. Involved in maceration and soft-rotting of plant tissue. Hydrolyzes the 1,4-alpha glycosidic bonds of de-esterified pectate in the smooth region of the plant cell wall. The chain is Probable endopolygalacturonase AFUB_016610 from Aspergillus fumigatus (strain CBS 144.89 / FGSC A1163 / CEA10) (Neosartorya fumigata).